Here is a 415-residue protein sequence, read N- to C-terminus: Adipocyte plasma membrane-associated protein (415 aa).

Residues 1-30 form a disordered region; sequence MNEAEGLRQRRPLRPQVITEDSPAQEAKEG. Residues 1-39 lie on the Cytoplasmic side of the membrane; it reads MNEAEGLRQRRPLRPQVITEDSPAQEAKEGSAYSSKVFR. A helical transmembrane segment spans residues 40–60; that stretch reads VTFLTLAASLAVPLLGATVLL. Over 61-412 the chain is Extracellular; that stretch reads DCPIDPQPIS…RSPFICRLNL (352 aa). N159 carries N-linked (GlcNAc...) asparagine glycosylation.

This sequence belongs to the strictosidine synthase family.

It localises to the membrane. This is Adipocyte plasma membrane-associated protein (APMAP) from Gallus gallus (Chicken).